The chain runs to 433 residues: 3-phosphoshikimate 1-carboxyvinyltransferase (433 aa).

Residues lysine 22, serine 23, and arginine 27 each contribute to the 3-phosphoshikimate site. Residue lysine 22 participates in phosphoenolpyruvate binding. Phosphoenolpyruvate-binding residues include glycine 94 and arginine 122. Residues serine 168, serine 169, glutamine 170, serine 196, aspartate 319, and lysine 346 each coordinate 3-phosphoshikimate. Glutamine 170 lines the phosphoenolpyruvate pocket. Aspartate 319 serves as the catalytic Proton acceptor. Phosphoenolpyruvate-binding residues include arginine 350, arginine 394, and lysine 418.

It belongs to the EPSP synthase family. As to quaternary structure, monomer.

It localises to the cytoplasm. The enzyme catalyses 3-phosphoshikimate + phosphoenolpyruvate = 5-O-(1-carboxyvinyl)-3-phosphoshikimate + phosphate. It participates in metabolic intermediate biosynthesis; chorismate biosynthesis; chorismate from D-erythrose 4-phosphate and phosphoenolpyruvate: step 6/7. Functionally, catalyzes the transfer of the enolpyruvyl moiety of phosphoenolpyruvate (PEP) to the 5-hydroxyl of shikimate-3-phosphate (S3P) to produce enolpyruvyl shikimate-3-phosphate and inorganic phosphate. This Nitrosomonas eutropha (strain DSM 101675 / C91 / Nm57) protein is 3-phosphoshikimate 1-carboxyvinyltransferase.